The sequence spans 338 residues: MDIWYGTAAVPKDLDNSAVTIGVFDGVHRGHQKLINATVEKAREVGAKAIMVTFDPHPVSVFLPRRAPLGITTLAERFALAESFGIDGVLVIDFTRELSGTSPEKYVEFLLEDTLHASHVVVGANFTFGENAAGTADSLRQICQSRLTVDVIDLLDDEGVRISSTTVREFLSEGDVARANWALGRHFYVTGPVVRGAGRGGKELGFPTANQYFHDTVALPADGVYAGWLTILPTEAPVSGNMEPEVAYAAAISVGTNPTFGDEQRSVESFVLDRDADLYGHDVKVEFVDHVRAMEKFDSVEQLLEVMAKDVQKTRTLLAQDVQAHKMAPETYFLQAES.

Belongs to the RibF family. A divalent metal cation is required as a cofactor.

The catalysed reaction is riboflavin + ATP = FMN + ADP + H(+). It carries out the reaction FMN + ATP + H(+) = FAD + diphosphate. It functions in the pathway cofactor biosynthesis; FAD biosynthesis; FAD from FMN: step 1/1. Its pathway is cofactor biosynthesis; FMN biosynthesis; FMN from riboflavin (ATP route): step 1/1. Its activity is regulated as follows. Higher divalent cation concentrations lead to decrease in the turnover of riboflavin and the 5'-phosphotransferase activity, while the adenylyltransferase activity increases. Functionally, catalyzes the phosphorylation of riboflavin to FMN followed by the adenylation of FMN to FAD. This Corynebacterium ammoniagenes (Brevibacterium ammoniagenes) protein is Bifunctional riboflavin kinase/FMN adenylyltransferase (ribF).